Here is a 464-residue protein sequence, read N- to C-terminus: NADH dehydrogenase [ubiquinone] flavoprotein 1, mitochondrial (464 aa).

A mitochondrion-targeting transit peptide spans 1–20 (MLATRRLLGWSLPARVSVRF). Lysine 81 is modified (N6-acetyllysine; alternate). At lysine 81 the chain carries N6-succinyllysine; alternate. NADH is bound at residue 87–96 (GRGGAGFPTG). Position 104 is an N6-acetyllysine (lysine 104). An FMN-binding site is contributed by 199–247 (RGAGAYICGEETALIESIEGKQGKPRLKPPFPADVGVFGCPTTVANVET). Arginine 257 is subject to Omega-N-methylarginine. Lysine 375 bears the N6-acetyllysine mark. Cysteine 379, cysteine 382, cysteine 385, and cysteine 425 together coordinate [4Fe-4S] cluster.

Belongs to the complex I 51 kDa subunit family. Core subunit of respiratory chain NADH dehydrogenase (Complex I) which is composed of 45 different subunits. This is a component of the flavoprotein-sulfur (FP) fragment of the enzyme. Interacts with RAB5IF. Requires FMN as cofactor. It depends on [4Fe-4S] cluster as a cofactor.

It is found in the mitochondrion inner membrane. The catalysed reaction is a ubiquinone + NADH + 5 H(+)(in) = a ubiquinol + NAD(+) + 4 H(+)(out). In terms of biological role, core subunit of the mitochondrial membrane respiratory chain NADH dehydrogenase (Complex I) which catalyzes electron transfer from NADH through the respiratory chain, using ubiquinone as an electron acceptor. Part of the peripheral arm of the enzyme, where the electrons from NADH are accepted by flavin mononucleotide (FMN) and then passed along a chain of iron-sulfur clusters by electron tunnelling to the final acceptor ubiquinone. Contains FMN, which is the initial electron acceptor as well as one iron-sulfur cluster. In Homo sapiens (Human), this protein is NADH dehydrogenase [ubiquinone] flavoprotein 1, mitochondrial.